Reading from the N-terminus, the 822-residue chain is MKNKYDFKLVEEKRNEKWQKKGFFIAPKQTKKPFSIISPPPNVTGQLHLGHSWNAFIQDSLVRYHKLQGFDVLLLPSVDHAGIATQVKVEEDLAKKGIKKSDLKREEFIKKCYHWKEKQYLKIKEQWDKLGICYDFSKERFTLDQDAQIAVSDFFIKLWEKNLIYRGQKAINWDIKLQTAISNIEVINKPVEQKMYYLKYFLENSNEFLTVATTRIETISSDVALAINPKDKRYLHLVGKKVVHPLTKKLIKIIADSNVGSDFGSGIMKVSAHSILDFEIMEKHNLESKDCIDNYGNLNHEVPEFQGQNRFFARDLIAKKLEKEGFLAKIETVISNVGFSQRSDEIVEILKKPQWFVKMDELAKSLISHLNSKDKIKFYPKNFEKNLRKWFEKIHDWTISRQLWWGHRIPVWYKNDEFKVQIDSPGQGWIQDEDVLDTWFSSGISVFAFLGWPQNFDLIKSYFPTSLLVTGWDILFFWVARMYFSSLFIMKQKPFEKVLLHGLIRDEIGRKMSKSLGNGLDPMEIIEKYGSDTLRQALIFNSSPGKDIKFNIEKLNTAWNLNNKIWNIAKYIADLDTFFAKPDLIDLWMENKIYILKRQIVKNIKKYNFSVIGTEINNFIYGDFSSRYIELIKTRKNGFYARKLLRKVLIILHPFLPFLTDFLMEKIFKMEILEQKMPRIRQFKENQKVENILEIIDNLRTYREKFQISKKIILEYCIINDKFSNAEIDIINKLTFGKWLENKELVIKTKNFEIAIKVPEELKKEQKGRELKEIQFLKSEILRAEKILTNKGFLEKAPREKIDLERTKLEKLKEKLAFYEKK.

Positions 41 to 51 match the 'HIGH' region motif; sequence PNVTGQLHLGH. Positions 511-515 match the 'KMSKS' region motif; the sequence is KMSKS. Residue Lys-514 coordinates ATP. A coiled-coil region spans residues 765 to 822; the sequence is EQKGRELKEIQFLKSEILRAEKILTNKGFLEKAPREKIDLERTKLEKLKEKLAFYEKK.

Belongs to the class-I aminoacyl-tRNA synthetase family. ValS type 1 subfamily. As to quaternary structure, monomer.

The protein localises to the cytoplasm. It carries out the reaction tRNA(Val) + L-valine + ATP = L-valyl-tRNA(Val) + AMP + diphosphate. Functionally, catalyzes the attachment of valine to tRNA(Val). As ValRS can inadvertently accommodate and process structurally similar amino acids such as threonine, to avoid such errors, it has a 'posttransfer' editing activity that hydrolyzes mischarged Thr-tRNA(Val) in a tRNA-dependent manner. The protein is Valine--tRNA ligase of Mesomycoplasma hyopneumoniae (strain 232) (Mycoplasma hyopneumoniae).